We begin with the raw amino-acid sequence, 530 residues long: MEDDSLYLRGEWQFNHFSKLTSSRPDAAFAEIQRTSLPEKSPLSCETRVDLCDDLAPVARQLAPREKLPLSSRRPAAVGAGLQNMGNTCYVNASLQCLTYTPPLANYMLSREHSQTCHRHKGCMLCTMQAHITRALHNPGHVIQPSQALAAGFHRGKQEDAHEFLMFTVDAMKKACLPGHKQVDHHSKDTTLIHQIFGGYWRSQIKCLHCHGISDTFDPYLDIALDIQAAQSVQQALEQLAKPEELNGENAYHCGVCLQRAPASKTLTLHTSAKVLILVLKRFSDVTGNKIAKNVQYPECLDMQPYMSQPNTGPLVYVLYAVLVHAGWSCHNGHYFSYVKAQEGQWYKMDDAEVTASSITSVLSQQAYVLFYIQKSEWERHSESVSRGREPRALGAEDTDRRATQGELKRDHPCLQAPELDEHLVERATQESTLDHWKFLQEQNKTKPEFNVRKVEGTLPPDVLVIHQSKYKCGMKNHHPEQQSSLLNLSSSTPTHQESMNTGTLASLRGRARRSKGKNKHSKRALLVCQ.

The USP domain maps to 80–375; sequence AGLQNMGNTC…QAYVLFYIQK (296 aa). Cysteine 89 serves as the catalytic Nucleophile. Catalysis depends on histidine 334, which acts as the Proton acceptor. Basic and acidic residues-rich tracts occupy residues 382–392 and 398–412; these read SESVSRGREPR and DTDRRATQGELKRDH. 2 disordered regions span residues 382–412 and 477–530; these read SESVSRGREPRALGAEDTDRRATQGELKRDH and NHHP…LVCQ. Positions 493–505 are enriched in polar residues; the sequence is TPTHQESMNTGTL. The segment covering 510–524 has biased composition (basic residues); it reads GRARRSKGKNKHSKR.

Belongs to the peptidase C19 family. USP17 subfamily.

It is found in the nucleus. It localises to the endoplasmic reticulum. The catalysed reaction is Thiol-dependent hydrolysis of ester, thioester, amide, peptide and isopeptide bonds formed by the C-terminal Gly of ubiquitin (a 76-residue protein attached to proteins as an intracellular targeting signal).. Its function is as follows. Deubiquitinating enzyme that removes conjugated ubiquitin from specific proteins to regulate different cellular processes that may include cell proliferation, progression through the cell cycle, apoptosis, cell migration, and the cellular response to viral infection. This is Ubiquitin carboxyl-terminal hydrolase 17-like protein 5 (USP17L5) from Homo sapiens (Human).